A 263-amino-acid polypeptide reads, in one-letter code: MSQQNGNADRVGAQGGMEHSFGFKAVDESEKQGLVNDVFHKVASKYDVMNDLMSAGMHRVWKDAMIAWLAPSKRPGWTSLDVAGGTGDIAFRIVEASGRQAHVTILDINGSMLGVGRERAIKKGLADNLEFVEASAEELPFEDASFDAYTISFGIRNVPHIDKALSEAYRVLKPGGRFLCLEFSEVELPVLDKVYDQWSFHAIPRIGKMITGDADSYSYLVESIRKFPKQQDFAAMIEKAGFERVSYRNFTGGIAALHSGWKL.

T86, D107, and S152 together coordinate S-adenosyl-L-methionine.

The protein belongs to the class I-like SAM-binding methyltransferase superfamily. MenG/UbiE family.

It carries out the reaction a 2-demethylmenaquinol + S-adenosyl-L-methionine = a menaquinol + S-adenosyl-L-homocysteine + H(+). It catalyses the reaction a 2-methoxy-6-(all-trans-polyprenyl)benzene-1,4-diol + S-adenosyl-L-methionine = a 5-methoxy-2-methyl-3-(all-trans-polyprenyl)benzene-1,4-diol + S-adenosyl-L-homocysteine + H(+). The protein operates within quinol/quinone metabolism; menaquinone biosynthesis; menaquinol from 1,4-dihydroxy-2-naphthoate: step 2/2. Its pathway is cofactor biosynthesis; ubiquinone biosynthesis. In terms of biological role, methyltransferase required for the conversion of demethylmenaquinol (DMKH2) to menaquinol (MKH2) and the conversion of 2-polyprenyl-6-methoxy-1,4-benzoquinol (DDMQH2) to 2-polyprenyl-3-methyl-6-methoxy-1,4-benzoquinol (DMQH2). This chain is Ubiquinone/menaquinone biosynthesis C-methyltransferase UbiE, found in Brucella anthropi (strain ATCC 49188 / DSM 6882 / CCUG 24695 / JCM 21032 / LMG 3331 / NBRC 15819 / NCTC 12168 / Alc 37) (Ochrobactrum anthropi).